Reading from the N-terminus, the 390-residue chain is GTPase Obg (390 aa).

In terms of domain architecture, Obg spans 1-159; it reads MKFVDEATIK…RELRLELLLL (159 aa). Residues 160–333 enclose the OBG-type G domain; it reads ADVGMLGLPN…LCDELADFMD (174 aa). GTP is bound by residues 166–173, 191–195, 213–216, 283–286, and 314–316; these read GLPNAGKS, FTTLI, DIPG, NKTD, and AAV. Residues serine 173 and threonine 193 each coordinate Mg(2+).

It belongs to the TRAFAC class OBG-HflX-like GTPase superfamily. OBG GTPase family. Monomer. It depends on Mg(2+) as a cofactor.

Its subcellular location is the cytoplasm. Its function is as follows. An essential GTPase which binds GTP, GDP and possibly (p)ppGpp with moderate affinity, with high nucleotide exchange rates and a fairly low GTP hydrolysis rate. Plays a role in control of the cell cycle, stress response, ribosome biogenesis and in those bacteria that undergo differentiation, in morphogenesis control. The polypeptide is GTPase Obg (Aliivibrio fischeri (strain ATCC 700601 / ES114) (Vibrio fischeri)).